Here is a 178-residue protein sequence, read N- to C-terminus: uncharacterized protein (178 aa).

The chain crosses the membrane as a helical span at residues 7–29 (FFVIFSILWGSLFLFSIIGSLGT).

It is found in the membrane. This is an uncharacterized protein from Bacillus subtilis (strain 168).